Consider the following 368-residue polypeptide: Nicotinate-nucleotide--dimethylbenzimidazole phosphoribosyltransferase (368 aa).

Glu314 functions as the Proton acceptor in the catalytic mechanism. The tract at residues 344-368 is disordered; that stretch reads DRADGADNSADSGASAGTVASDPTV. Residues 349-360 are compositionally biased toward low complexity; the sequence is ADNSADSGASAG.

This sequence belongs to the CobT family.

It carries out the reaction 5,6-dimethylbenzimidazole + nicotinate beta-D-ribonucleotide = alpha-ribazole 5'-phosphate + nicotinate + H(+). Its pathway is nucleoside biosynthesis; alpha-ribazole biosynthesis; alpha-ribazole from 5,6-dimethylbenzimidazole: step 1/2. In terms of biological role, catalyzes the synthesis of alpha-ribazole-5'-phosphate from nicotinate mononucleotide (NAMN) and 5,6-dimethylbenzimidazole (DMB). In Corynebacterium efficiens (strain DSM 44549 / YS-314 / AJ 12310 / JCM 11189 / NBRC 100395), this protein is Nicotinate-nucleotide--dimethylbenzimidazole phosphoribosyltransferase.